A 297-amino-acid chain; its full sequence is ATP synthase gamma chain (297 aa).

It belongs to the ATPase gamma chain family. F-type ATPases have 2 components, CF(1) - the catalytic core - and CF(0) - the membrane proton channel. CF(1) has five subunits: alpha(3), beta(3), gamma(1), delta(1), epsilon(1). CF(0) has three main subunits: a, b and c.

The protein resides in the cell membrane. Functionally, produces ATP from ADP in the presence of a proton gradient across the membrane. The gamma chain is believed to be important in regulating ATPase activity and the flow of protons through the CF(0) complex. The sequence is that of ATP synthase gamma chain from Beutenbergia cavernae (strain ATCC BAA-8 / DSM 12333 / CCUG 43141 / JCM 11478 / NBRC 16432 / NCIMB 13614 / HKI 0122).